Here is a 174-residue protein sequence, read N- to C-terminus: Protein-export protein SecB (174 aa).

It belongs to the SecB family. Homotetramer, a dimer of dimers. One homotetramer interacts with 1 SecA dimer.

It is found in the cytoplasm. One of the proteins required for the normal export of preproteins out of the cell cytoplasm. It is a molecular chaperone that binds to a subset of precursor proteins, maintaining them in a translocation-competent state. It also specifically binds to its receptor SecA. The protein is Protein-export protein SecB of Ehrlichia ruminantium (strain Gardel).